The following is a 317-amino-acid chain: Putative 2-hydroxyacid dehydrogenase SE_1879 (317 aa).

Residues 155-156 (EI), 234-236 (AGR), and Asp260 contribute to the NAD(+) site. Arg236 is an active-site residue. The active site involves Glu265. The Proton donor role is filled by His283. Position 283 to 286 (283 to 286 (HIGN)) interacts with NAD(+).

It belongs to the D-isomer specific 2-hydroxyacid dehydrogenase family.

This is Putative 2-hydroxyacid dehydrogenase SE_1879 from Staphylococcus epidermidis (strain ATCC 12228 / FDA PCI 1200).